Consider the following 98-residue polypeptide: MSLTYMNMFMAFTISLLGLLLYRSHMMSSLLCLEGMMLSLFVMMTMVILNTHLTLASMIPIILLVFAACEAALGLSLLVMVSTTYGMDYVQNLNLLQC.

3 consecutive transmembrane segments (helical) span residues 1–21, 29–49, and 61–81; these read MSLTYMNMFMAFTISLLGLLL, SLLCLEGMMLSLFVMMTMVIL, and IILLVFAACEAALGLSLLVMV.

Belongs to the complex I subunit 4L family. As to quaternary structure, core subunit of respiratory chain NADH dehydrogenase (Complex I) which is composed of 45 different subunits.

It localises to the mitochondrion inner membrane. It catalyses the reaction a ubiquinone + NADH + 5 H(+)(in) = a ubiquinol + NAD(+) + 4 H(+)(out). Its function is as follows. Core subunit of the mitochondrial membrane respiratory chain NADH dehydrogenase (Complex I) which catalyzes electron transfer from NADH through the respiratory chain, using ubiquinone as an electron acceptor. Part of the enzyme membrane arm which is embedded in the lipid bilayer and involved in proton translocation. The chain is NADH-ubiquinone oxidoreductase chain 4L (MT-ND4L) from Platyrrhinus helleri (Heller's broad-nosed bat).